Reading from the N-terminus, the 201-residue chain is MSRYTGPSWKVSRRLGFSLSGTGKELSRRPYAPGQHGQDRRGSLSEYGLQLREKQKLRMTYGLTERQFSNLFKRAGKIREGKHGDNFMILLERRLDNVVYRLGLASTRRQARQLVNHGHITVDGKRVDIPSYEVEPGQVISLRERSKDLQIVKEALEAVVGRVPFVNFDENKMEGTLVRLPDREELDANIDEALVVEFYNR.

The segment at 20–46 (SGTGKELSRRPYAPGQHGQDRRGSLSE) is disordered. An S4 RNA-binding domain is found at 93-156 (RRLDNVVYRL…KDLQIVKEAL (64 aa)).

It belongs to the universal ribosomal protein uS4 family. As to quaternary structure, part of the 30S ribosomal subunit. Contacts protein S5. The interaction surface between S4 and S5 is involved in control of translational fidelity.

Functionally, one of the primary rRNA binding proteins, it binds directly to 16S rRNA where it nucleates assembly of the body of the 30S subunit. Its function is as follows. With S5 and S12 plays an important role in translational accuracy. The polypeptide is Small ribosomal subunit protein uS4 (Ligilactobacillus salivarius (strain UCC118) (Lactobacillus salivarius)).